The chain runs to 102 residues: ATP-dependent Clp protease adapter protein ClpS (102 aa).

This sequence belongs to the ClpS family. In terms of assembly, binds to the N-terminal domain of the chaperone ClpA.

Its function is as follows. Involved in the modulation of the specificity of the ClpAP-mediated ATP-dependent protein degradation. The sequence is that of ATP-dependent Clp protease adapter protein ClpS from Janthinobacterium sp. (strain Marseille) (Minibacterium massiliensis).